The sequence spans 210 residues: Pyridoxine/pyridoxamine 5'-phosphate oxidase (210 aa).

Residues 7 to 10 and lysine 65 each bind substrate; that span reads RDEY. FMN contacts are provided by residues 60–65, 75–76, arginine 81, lysine 82, and glutamine 104; these read RMVLLK and FT. Substrate-binding residues include tyrosine 122, arginine 126, and serine 130. FMN-binding positions include 139–140 and tryptophan 183; that span reads QS. 189–191 provides a ligand contact to substrate; that stretch reads RLH. Arginine 193 lines the FMN pocket.

This sequence belongs to the pyridoxamine 5'-phosphate oxidase family. Homodimer. Requires FMN as cofactor.

It carries out the reaction pyridoxamine 5'-phosphate + O2 + H2O = pyridoxal 5'-phosphate + H2O2 + NH4(+). It catalyses the reaction pyridoxine 5'-phosphate + O2 = pyridoxal 5'-phosphate + H2O2. Its pathway is cofactor metabolism; pyridoxal 5'-phosphate salvage; pyridoxal 5'-phosphate from pyridoxamine 5'-phosphate: step 1/1. It participates in cofactor metabolism; pyridoxal 5'-phosphate salvage; pyridoxal 5'-phosphate from pyridoxine 5'-phosphate: step 1/1. Catalyzes the oxidation of either pyridoxine 5'-phosphate (PNP) or pyridoxamine 5'-phosphate (PMP) into pyridoxal 5'-phosphate (PLP). The sequence is that of Pyridoxine/pyridoxamine 5'-phosphate oxidase from Haemophilus influenzae (strain ATCC 51907 / DSM 11121 / KW20 / Rd).